The chain runs to 300 residues: GTP-binding protein At2g22870 (300 aa).

The 179-residue stretch at 119-297 (DRPEIAILGR…LLHMSQLRNY (179 aa)) folds into the EngB-type G domain. Residues 127 to 134 (GRSNVGKS), 154 to 158 (GKTQL), 172 to 175 (DLPG), 239 to 242 (TKCD), and 276 to 278 (TSS) each bind GTP. Mg(2+) is bound by residues Ser134 and Thr156.

The protein belongs to the TRAFAC class TrmE-Era-EngA-EngB-Septin-like GTPase superfamily. EngB GTPase family. Mg(2+) serves as cofactor.

This Arabidopsis thaliana (Mouse-ear cress) protein is GTP-binding protein At2g22870 (EMB2001).